A 214-amino-acid chain; its full sequence is Reticulon-3-A (214 aa).

The disordered stretch occupies residues 1–21 (MAETSGPQSSHISSSSVGEKG). The Reticulon domain maps to 26–214 (VRDLLYWRDV…LPGALKKKSE (189 aa)). A run of 2 helical transmembrane segments spans residues 46 to 66 (MVLL…YLVL) and 155 to 175 (VFNG…APIV).

Homodimer. As to expression, expressed in the animal hemisphere at the four-cell stage. During gastrulation, expression becomes restricted to the prospective neuroectoderm. At the early tail bud stage, expressed in the head structure. At the tadpole stage, expressed in head and neural tissues including the otic vesicle and optic nerve.

The protein resides in the endoplasmic reticulum membrane. The protein localises to the golgi apparatus membrane. Functionally, may be involved in membrane trafficking in the early secretory pathway. The polypeptide is Reticulon-3-A (rtn3-a) (Xenopus laevis (African clawed frog)).